The following is a 252-amino-acid chain: Imidazole glycerol phosphate synthase subunit HisF (252 aa).

Active-site residues include aspartate 11 and aspartate 130.

This sequence belongs to the HisA/HisF family. As to quaternary structure, heterodimer of HisH and HisF.

It is found in the cytoplasm. The catalysed reaction is 5-[(5-phospho-1-deoxy-D-ribulos-1-ylimino)methylamino]-1-(5-phospho-beta-D-ribosyl)imidazole-4-carboxamide + L-glutamine = D-erythro-1-(imidazol-4-yl)glycerol 3-phosphate + 5-amino-1-(5-phospho-beta-D-ribosyl)imidazole-4-carboxamide + L-glutamate + H(+). The protein operates within amino-acid biosynthesis; L-histidine biosynthesis; L-histidine from 5-phospho-alpha-D-ribose 1-diphosphate: step 5/9. In terms of biological role, IGPS catalyzes the conversion of PRFAR and glutamine to IGP, AICAR and glutamate. The HisF subunit catalyzes the cyclization activity that produces IGP and AICAR from PRFAR using the ammonia provided by the HisH subunit. This is Imidazole glycerol phosphate synthase subunit HisF from Anoxybacillus flavithermus (strain DSM 21510 / WK1).